We begin with the raw amino-acid sequence, 135 residues long: Large ribosomal subunit protein uL16c (135 aa).

The protein belongs to the universal ribosomal protein uL16 family. In terms of assembly, part of the 50S ribosomal subunit.

The protein localises to the plastid. It is found in the chloroplast. This Lactuca sativa (Garden lettuce) protein is Large ribosomal subunit protein uL16c.